The chain runs to 706 residues: Choline transporter-like protein 2 (706 aa).

Topologically, residues 1–33 (MGDERPHYYGKHGTPQKYDPTFKGPIYNRGCTD) are cytoplasmic. Threonine 14 is subject to Phosphothreonine. A helical membrane pass occupies residues 34 to 54 (IICCVFLLLAIVGYVAVGIIA). Residues 55 to 232 (WTHGDPRKVI…RIFEDYTVSW (178 aa)) lie on the Extracellular side of the membrane. N-linked (GlcNAc...) asparagine glycans are attached at residues asparagine 187 and asparagine 200. A helical membrane pass occupies residues 233–253 (YWIIIGLVIAMAMSLLFIILL). The Cytoplasmic segment spans residues 254 to 256 (RFL). Residues 257 to 277 (AGIMVWVMIIMVILVLGYGIF) form a helical membrane-spanning segment. At 278-315 (HCYMEYSRLRGEAGSDVSLVDLGFQTDFRVYLHLRQTW) the chain is on the extracellular side. A helical membrane pass occupies residues 316–336 (LAFMIILSILEVIIILLLIFL). At 337–364 (RKRILIAIALIKEASRAVGYVMCSLLYP) the chain is on the cytoplasmic side. Residues 365 to 385 (LVTFFLLCLCIAYWASTAVFL) traverse the membrane as a helical segment. Over 386 to 457 (STSNEAVYKI…FNAFMFFWLA (72 aa)) the chain is Extracellular. Residue asparagine 417 is glycosylated (N-linked (GlcNAc...) asparagine). Residues 458-480 (NFVLALGQVTLAGAFASYYWALR) form a helical membrane-spanning segment. Residues 481–504 (KPDDLPAFPLFSAFGRALRYHTGS) lie on the Cytoplasmic side of the membrane. Residues 505-525 (LAFGALILAIVQIIRVILEYL) form a helical membrane-spanning segment. The Extracellular segment spans residues 526 to 563 (DQRLKAAENKFAKCLMTCLKCCFWCLEKFIKFLNRNAY). The helical transmembrane segment at 564–584 (IMIAIYGTNFCTSARNAFFLL) threads the bilayer. The Cytoplasmic portion of the chain corresponds to 585–599 (MRNIIRVAVLDKVTD). A helical transmembrane segment spans residues 600 to 620 (FLFLLGKLLIVGSVGILAFFF). Over 621–638 (FTHRIRIVQDTAPPLNYY) the chain is Extracellular. A helical membrane pass occupies residues 639–659 (WVPILTVIVGSYLIAHGFFSV). The Cytoplasmic portion of the chain corresponds to 660-706 (YGMCVDTLFLCFLEDLERNDGSAERPYFMSSTLKKLLNKTNKKAAES).

Belongs to the CTL (choline transporter-like) family. Interacts with COCH. As to expression, present in supporting cells of the inner ear (at protein level). In terms of tissue distribution, expressed in inner ear vestibular tissue.

The protein resides in the cell membrane. It is found in the mitochondrion outer membrane. It carries out the reaction choline(out) + n H(+)(in) = choline(in) + n H(+)(out). The catalysed reaction is ethanolamine(out) + n H(+)(in) = ethanolamine(in) + n H(+)(out). In terms of biological role, choline/H+ antiporter, mainly in mitochodria. Also acts as a low-affinity ethanolamine/H+ antiporter, regulating the supply of extracellular ethanolamine (Etn) for the CDP-Etn pathway, redistribute intracellular Etn and balance the CDP-Cho and CDP-Etn arms of the Kennedy pathway. Does not exhibit choline transporter activity. This Homo sapiens (Human) protein is Choline transporter-like protein 2.